The primary structure comprises 138 residues: ATP synthase epsilon chain, chloroplastic (138 aa).

It belongs to the ATPase epsilon chain family. As to quaternary structure, F-type ATPases have 2 components, CF(1) - the catalytic core - and CF(0) - the membrane proton channel. CF(1) has five subunits: alpha(3), beta(3), gamma(1), delta(1), epsilon(1). CF(0) has three main subunits: a, b and c.

The protein resides in the plastid. The protein localises to the chloroplast thylakoid membrane. Produces ATP from ADP in the presence of a proton gradient across the membrane. The polypeptide is ATP synthase epsilon chain, chloroplastic (Staurastrum punctulatum (Green alga)).